The following is a 457-amino-acid chain: Galactose/lactose metabolism regulatory protein GAL80 (457 aa).

The disordered stretch occupies residues 333–364 (NGTDNNGAAAIKDKEKVTKSPSPSTGTSEEEQ).

The protein to yeast GAL80.

Its function is as follows. This protein is a negative regulator for the gene expression of the lactose/galactose metabolic genes. It seems to block activation by the transcriptional activator LAC9 in the absence of an inducing sugar. The polypeptide is Galactose/lactose metabolism regulatory protein GAL80 (GAL80) (Kluyveromyces lactis (strain ATCC 8585 / CBS 2359 / DSM 70799 / NBRC 1267 / NRRL Y-1140 / WM37) (Yeast)).